The sequence spans 367 residues: Ferrochelatase (367 aa).

Residues His-226 and Glu-307 each contribute to the Fe cation site.

Belongs to the ferrochelatase family.

The protein resides in the cytoplasm. The catalysed reaction is heme b + 2 H(+) = protoporphyrin IX + Fe(2+). It participates in porphyrin-containing compound metabolism; protoheme biosynthesis; protoheme from protoporphyrin-IX: step 1/1. Its function is as follows. Catalyzes the ferrous insertion into protoporphyrin IX. This chain is Ferrochelatase, found in Burkholderia mallei (strain NCTC 10247).